The following is a 199-amino-acid chain: ATP-dependent Clp protease proteolytic subunit (199 aa).

S103 functions as the Nucleophile in the catalytic mechanism. Residue H128 is part of the active site.

The protein belongs to the peptidase S14 family. Fourteen ClpP subunits assemble into 2 heptameric rings which stack back to back to give a disk-like structure with a central cavity, resembling the structure of eukaryotic proteasomes.

The protein localises to the cytoplasm. The catalysed reaction is Hydrolysis of proteins to small peptides in the presence of ATP and magnesium. alpha-casein is the usual test substrate. In the absence of ATP, only oligopeptides shorter than five residues are hydrolyzed (such as succinyl-Leu-Tyr-|-NHMec, and Leu-Tyr-Leu-|-Tyr-Trp, in which cleavage of the -Tyr-|-Leu- and -Tyr-|-Trp bonds also occurs).. Cleaves peptides in various proteins in a process that requires ATP hydrolysis. Has a chymotrypsin-like activity. Plays a major role in the degradation of misfolded proteins. In Photobacterium profundum (strain SS9), this protein is ATP-dependent Clp protease proteolytic subunit.